The chain runs to 106 residues: SH3 domain-binding glutamic acid-rich-like protein 2-A (106 aa).

Residues 61–67 (QGNPLPP) carry the SH3-binding motif.

The protein belongs to the SH3BGR family.

The protein localises to the nucleus. This chain is SH3 domain-binding glutamic acid-rich-like protein 2-A (sh3bgrl2-a), found in Xenopus laevis (African clawed frog).